A 109-amino-acid chain; its full sequence is U3-lycotoxin-Ls1x (109 aa).

The signal sequence occupies residues 1–20 (MKFVLLFGVLLVTLFSYSSA). Positions 21–44 (EMLDDFDQADEDELLSLIEKEEAR) are excised as a propeptide. Disulfide bonds link Cys48–Cys63, Cys55–Cys72, Cys62–Cys88, and Cys74–Cys86.

The protein belongs to the neurotoxin 19 (CSTX) family. 01 subfamily. As to expression, expressed by the venom gland.

Its subcellular location is the secreted. The polypeptide is U3-lycotoxin-Ls1x (Lycosa singoriensis (Wolf spider)).